The following is a 371-amino-acid chain: Neutral protease 2 homolog MGYG_03465 (371 aa).

Positions 1–19 (MQFVAVLAALGALVAPAAA) are cleaved as a signal peptide. Residues 20–188 (YPHAPMNETL…SIHARALEKR (169 aa)) constitute a propeptide that is removed on maturation. 2 disulfides stabilise this stretch: C196/C267 and C274/C292. Zn(2+) is bound at residue H316. E317 is a catalytic residue. The Zn(2+) site is built by H320 and D331.

It belongs to the peptidase M35 family. Zn(2+) serves as cofactor.

The protein resides in the secreted. The catalysed reaction is Preferential cleavage of bonds with hydrophobic residues in P1'. Also 3-Asn-|-Gln-4 and 8-Gly-|-Ser-9 bonds in insulin B chain.. Secreted metalloproteinase that allows assimilation of proteinaceous substrates. Shows high activities on basic nuclear substrates such as histone and protamine. May be involved in virulence. This Arthroderma gypseum (strain ATCC MYA-4604 / CBS 118893) (Microsporum gypseum) protein is Neutral protease 2 homolog MGYG_03465.